The primary structure comprises 202 residues: Peptide methionine sulfoxide reductase B2, chloroplastic (202 aa).

Residues 1 to 63 (MAFNIITPGR…RRGFHGGRIV (63 aa)) constitute a chloroplast transit peptide. Residues 77–198 (EEEWRAILSP…NSISLKFTPE (122 aa)) form the MsrB domain. Residues cysteine 116, cysteine 119, cysteine 162, and cysteine 165 each coordinate Zn(2+). Cysteine 134 and cysteine 187 form a disulfide bridge. The active-site Nucleophile is the cysteine 187.

This sequence belongs to the MsrB Met sulfoxide reductase family. It depends on Zn(2+) as a cofactor. In terms of tissue distribution, expressed in stems, young leaves, floral buds and flowers. Expressed at low levels in roots, mature leaves and siliques (at protein level).

The protein localises to the plastid. It is found in the chloroplast. It carries out the reaction L-methionyl-[protein] + [thioredoxin]-disulfide + H2O = L-methionyl-(R)-S-oxide-[protein] + [thioredoxin]-dithiol. Its function is as follows. Catalyzes the reduction of methionine sulfoxide (MetSO) to methionine in proteins. Specifically reduces the MetSO R-enantiomer. Plays a protective role against oxidative stress by restoring activity to proteins that have been inactivated by methionine oxidation. May play an essential function in association with MSRB1 in maintaining vegetative growth during environmental constraints, through the preservation of photosynthetic antennae. MSRB1 and MSRB2 account for most of the leaf peptide MSR capacity. The polypeptide is Peptide methionine sulfoxide reductase B2, chloroplastic (Arabidopsis thaliana (Mouse-ear cress)).